Consider the following 309-residue polypeptide: Replication factor C subunit 4 (309 aa).

Residues V5, V17, 42-50 (GPPGTGKTT), N134, and R192 each bind ATP.

This sequence belongs to the activator 1 small subunits family. In terms of assembly, component of the replication factor C (RFC) complex.

The protein localises to the nucleus. Functionally, component of ATP-dependent clamp loader (RFC and RFC-like) complexes for DNA clamps. During a clamp loading circle, the RFC:clamp complex binds to DNA and the recognition of the double-stranded/single-stranded junction stimulates ATP hydrolysis by RFC. The complex presumably provides bipartite ATP sites in which one subunit supplies a catalytic site for hydrolysis of ATP bound to the neighboring subunit. Dissociation of RFC from the clamp leaves the clamp encircling DNA. Component of the replication factor C (RFC or activator 1) complex which acts during elongation of primed DNA templates by DNA polymerase delta and epsilon. RFC has an essential but redundant activity in sister chromatid cohesion establishment. This Encephalitozoon cuniculi (strain GB-M1) (Microsporidian parasite) protein is Replication factor C subunit 4 (RFC4).